Reading from the N-terminus, the 724-residue chain is Pediocin PA-1 transport/processing ATP-binding protein PedD (724 aa).

Residues 13–140 (QVDENDCGLA…KEWTQIAIII (128 aa)) form the Peptidase C39 domain. C19 is a catalytic residue. The next 6 helical transmembrane spans lie at 170-190 (IGLI…GAYF), 207-227 (LSLV…INYI), 284-304 (TTLT…FLAY), 307-327 (INLF…VWLF), 396-416 (IKAA…TFFV), and 426-446 (LLTY…IINL). Positions 170–452 (IGLIITAAAI…IINLQPKLQA (283 aa)) constitute an ABC transmembrane type-1 domain. Residues 486–722 (IEVNHVSFNY…NGYYARLIHN (237 aa)) form the ABC transporter domain. 519 to 526 (GMSGSGKT) is an ATP binding site.

It belongs to the ABC transporter superfamily. Pediocin PA-1 exporter (TC 3.A.1.112.2) family.

The protein resides in the cell membrane. Its function is as follows. Involved in the export process of the bacteriocin pediocin PA-1/AcH. Is also essential for pediocin production. In Pediococcus acidilactici, this protein is Pediocin PA-1 transport/processing ATP-binding protein PedD (pedD).